Here is an 868-residue protein sequence, read N- to C-terminus: Ionotropic receptor 93a (868 aa).

The signal sequence occupies residues Met-1 to Ala-28. At Asn-29–Arg-565 the chain is on the extracellular side. Residues Asn-38, Asn-205, Asn-294, Asn-305, Asn-432, Asn-475, Asn-499, and Asn-543 are each glycosylated (N-linked (GlcNAc...) asparagine). The chain crosses the membrane as a helical span at residues Ile-566–Leu-586. At Leu-587–Gly-642 the chain is on the cytoplasmic side. A helical transmembrane segment spans residues Phe-643 to Leu-663. Residues Thr-664–Gly-832 are Extracellular-facing. Asn-691 is a glycosylation site (N-linked (GlcNAc...) asparagine). Residues Cys-833–Trp-853 traverse the membrane as a helical segment. The Cytoplasmic segment spans residues Tyr-854–Asn-868.

It belongs to the glutamate-gated ion channel (TC 1.A.10.1) family. As to expression, in the antenna, detected in sacculus neurons which innervate the first and second chambers (at protein level). Expressed in multiple cells of the larval dorsal organ ganglion, including the dorsal organ cool cells where it is predominately localized to the dendritic bulbs (at protein level).

It is found in the cell membrane. Functionally, integral part of various neural sensory systems in the antenna that provide the neural basis for the response to environmental changes in temperature (thermosensation) and humidity (hygrosensation). Together with Ir21a and Ir25a, mediates the response of the larval dorsal organ cool cells, a trio of cool-responsive neurons, to cooling and is required for cool avoidance behavior. Together with Ir25a and Ir40a, mediates the response of the hydrosensory sacculus neurons to changes in relative humidity, and is required for dry detection and humidiy preference behavior. This chain is Ionotropic receptor 93a, found in Drosophila melanogaster (Fruit fly).